A 126-amino-acid chain; its full sequence is Aspartate 1-decarboxylase (126 aa).

The active-site Schiff-base intermediate with substrate; via pyruvic acid is the S25. S25 is modified (pyruvic acid (Ser)). Residue T57 participates in substrate binding. The active-site Proton donor is Y58. Substrate is bound at residue 73-75; it reads GAA.

This sequence belongs to the PanD family. Heterooctamer of four alpha and four beta subunits. Requires pyruvate as cofactor. In terms of processing, is synthesized initially as an inactive proenzyme, which is activated by self-cleavage at a specific serine bond to produce a beta-subunit with a hydroxyl group at its C-terminus and an alpha-subunit with a pyruvoyl group at its N-terminus.

Its subcellular location is the cytoplasm. It carries out the reaction L-aspartate + H(+) = beta-alanine + CO2. The protein operates within cofactor biosynthesis; (R)-pantothenate biosynthesis; beta-alanine from L-aspartate: step 1/1. In terms of biological role, catalyzes the pyruvoyl-dependent decarboxylation of aspartate to produce beta-alanine. In Escherichia coli O6:H1 (strain CFT073 / ATCC 700928 / UPEC), this protein is Aspartate 1-decarboxylase.